The following is a 271-amino-acid chain: Phosphatidylglycerol--prolipoprotein diacylglyceryl transferase (271 aa).

Transmembrane regions (helical) follow at residues 17–37 (LAIH…FFLA), 63–83 (ILFL…CLFY), and 95–115 (IFAV…VLVS). An a 1,2-diacyl-sn-glycero-3-phospho-(1'-sn-glycerol)-binding site is contributed by R146. The next 3 helical transmembrane spans lie at 182-202 (SQVY…WLYA), 209-229 (GQVS…AEFF), and 243-263 (MSMG…LWIW).

It belongs to the Lgt family.

Its subcellular location is the cell inner membrane. It carries out the reaction L-cysteinyl-[prolipoprotein] + a 1,2-diacyl-sn-glycero-3-phospho-(1'-sn-glycerol) = an S-1,2-diacyl-sn-glyceryl-L-cysteinyl-[prolipoprotein] + sn-glycerol 1-phosphate + H(+). It functions in the pathway protein modification; lipoprotein biosynthesis (diacylglyceryl transfer). In terms of biological role, catalyzes the transfer of the diacylglyceryl group from phosphatidylglycerol to the sulfhydryl group of the N-terminal cysteine of a prolipoprotein, the first step in the formation of mature lipoproteins. The polypeptide is Phosphatidylglycerol--prolipoprotein diacylglyceryl transferase (Polaromonas naphthalenivorans (strain CJ2)).